The following is a 239-amino-acid chain: UDP-2,3-diacylglucosamine hydrolase (239 aa).

Mn(2+) contacts are provided by Asp9, His11, Asp42, Asn80, and His115. 80 to 81 (NR) is a substrate binding site. Substrate is bound by residues Asp123, Ser161, Lys165, Lys168, and His196. 2 residues coordinate Mn(2+): His196 and His198.

This sequence belongs to the LpxH family. Mn(2+) serves as cofactor.

Its subcellular location is the cell inner membrane. The catalysed reaction is UDP-2-N,3-O-bis[(3R)-3-hydroxytetradecanoyl]-alpha-D-glucosamine + H2O = 2-N,3-O-bis[(3R)-3-hydroxytetradecanoyl]-alpha-D-glucosaminyl 1-phosphate + UMP + 2 H(+). Its pathway is glycolipid biosynthesis; lipid IV(A) biosynthesis; lipid IV(A) from (3R)-3-hydroxytetradecanoyl-[acyl-carrier-protein] and UDP-N-acetyl-alpha-D-glucosamine: step 4/6. Hydrolyzes the pyrophosphate bond of UDP-2,3-diacylglucosamine to yield 2,3-diacylglucosamine 1-phosphate (lipid X) and UMP by catalyzing the attack of water at the alpha-P atom. Involved in the biosynthesis of lipid A, a phosphorylated glycolipid that anchors the lipopolysaccharide to the outer membrane of the cell. The sequence is that of UDP-2,3-diacylglucosamine hydrolase from Pasteurella multocida (strain Pm70).